The following is a 610-amino-acid chain: Glutamine--fructose-6-phosphate aminotransferase [isomerizing] (610 aa).

The active-site Nucleophile; for GATase activity is the C2. One can recognise a Glutamine amidotransferase type-2 domain in the interval 2–218 (CGIVGAVAQR…EGDVAEITRH (217 aa)). 2 consecutive SIS domains span residues 286 to 426 (AADI…LKGR) and 459 to 600 (LSED…VDQP). K605 functions as the For Fru-6P isomerization activity in the catalytic mechanism.

Homodimer.

Its subcellular location is the cytoplasm. It catalyses the reaction D-fructose 6-phosphate + L-glutamine = D-glucosamine 6-phosphate + L-glutamate. Catalyzes the first step in hexosamine metabolism, converting fructose-6P into glucosamine-6P using glutamine as a nitrogen source. In Haemophilus ducreyi (strain 35000HP / ATCC 700724), this protein is Glutamine--fructose-6-phosphate aminotransferase [isomerizing].